The primary structure comprises 917 residues: Calcium-activated chloride channel regulator 1 (917 aa).

Positions 1 to 21 (MGSFRSSLFILVLHLLEGAQS) are cleaved as a signal peptide. The interval 46-199 (DERLIQNIKD…AIRGTNVLPQ (154 aa)) is metalloprotease domain. His156 serves as a coordination point for Zn(2+). Glu157 is a catalytic residue. His160 and Asn167 together coordinate Zn(2+). A VWFA domain is found at 306 to 475 (IVCLVLDKSG…NGLIDAFGAL (170 aa)). 6 N-linked (GlcNAc...) asparagine glycosylation sites follow: Asn503, Asn772, Asn806, Asn812, Asn838, and Asn893.

It belongs to the CLCR family. Glycosylated. In terms of processing, the translation product is autoproteolytically cleaved by the metalloprotease domain in the endoplasmic reticulum into a N-terminal and a C-terminal products that remain physically associated with each other. The cleavage is necessary for calcium-activated chloride channel (CaCC) activation activity. In terms of tissue distribution, expressed in ileum, trachea, and the major salivary glands. In ileum, expressed to the crypt and villus epithelia, whereas in trachea expressed in both surface epithelium and submucosal glands.

The protein resides in the secreted. The protein localises to the extracellular space. In terms of biological role, may be involved in mediating calcium-activated chloride conductance. May play critical roles in goblet cell metaplasia, mucus hypersecretion, cystic fibrosis and AHR. May be involved in the regulation of mucus production and/or secretion by goblet cells. Involved in the regulation of tissue inflammation in the innate immune response. May play a role as a tumor suppressor. Induces MUC5AC. Induces a cAMP-dependent chloride conductance possibly through effects on CFTR in colon carcinoma cells. The sequence is that of Calcium-activated chloride channel regulator 1 (CLCA1) from Sus scrofa (Pig).